The following is an 800-amino-acid chain: Putative antiporter subunit mnhA2 (800 aa).

Helical transmembrane passes span 1 to 21 (MSLVYLLIAILVIMAMILLTS), 33 to 53 (IALTAPVIASIYFLLQVPSVI), 78 to 98 (GLSLMFSLIISLIGIAVFFYA), 118 to 138 (LFMFSMLGIVLADNTILMYVF), 167 to 187 (FMITVFGGLALLVGFIMLYIM), 207 to 227 (ALFIPMIIMFLLGAFTKSAQF), 241 to 261 (TPVSAYLHSATMVKAGIFLLL), 273 to 293 (YIYIVTFVGLITMLFGSITAL), 300 to 320 (GILAYSTISQLGMIMAMVGIG), 331 to 351 (IASIYVFVLFAALFHLMNHAI), 387 to 407 (LVMMIAALSMAGVPFLNGFLS), 424 to 444 (FSLISMIIIVCMGVIASIFTF), 472 to 492 (PWLFSLPSLILMVLVPVIFFV), 527 to 547 (GFNIPLLLTIIIILLGSVLAI), 595 to 615 (IIMTLGIFMVIIGYGYIRIGL), 627 to 647 (GPLEVILAIVTVIIGLSLIFI), 651 to 671 (LTMVILNGVIGFVVTLFFIAM), 676 to 696 (LALTQLVVETITTILFIVSFS), 712 to 732 (IIKISVSLMMALIVVSLIFIA), and 768 to 788 (LDTLFEGLVLIITGLGIYTLL).

It belongs to the CPA3 antiporters (TC 2.A.63) subunit A family. In terms of assembly, may form a heterooligomeric complex that consists of seven subunits: mnhA2, mnhB2, mnhC2, mnhD2, mnhE2, mnhF2 and mnhG2.

The protein resides in the cell membrane. This Staphylococcus aureus (strain MRSA252) protein is Putative antiporter subunit mnhA2 (mnhA2).